The primary structure comprises 521 residues: Outer membrane protein assembly factor BamB (521 aa).

Residues 1–19 (MKKLFLVIVPLLLSLLATS) form the signal peptide. Cys20 carries N-palmitoyl cysteine lipidation. Cys20 carries S-diacylglycerol cysteine lipidation. The tract at residues 418–521 (KSGSIESSPK…IGDFSKGDSD (104 aa)) is disordered. The span at 429 to 444 (LPDKKVDSNKTSKNDT) shows a compositional bias: basic and acidic residues. Polar residues predominate over residues 445–477 (DSNPATTATSTKDIQNPANQEMINSTPVSNTST).

Belongs to the BamB family. In terms of assembly, part of the Bam complex.

The protein localises to the cell outer membrane. Its function is as follows. Part of the outer membrane protein assembly complex, which is involved in assembly and insertion of beta-barrel proteins into the outer membrane. This Francisella salina protein is Outer membrane protein assembly factor BamB.